The primary structure comprises 76 residues: Omega-scoloptoxin(15)-Ssd3c (76 aa).

The N-terminal stretch at 1–23 is a signal peptide; sequence MEKKIIFLVVLVALLALPEFISS.

The protein belongs to the scoloptoxin-15 family. In terms of processing, contains 2 disulfide bonds. In terms of tissue distribution, expressed by the venom gland.

Its subcellular location is the secreted. In terms of biological role, voltage-gated calcium channel inhibitor (Cav) (8.6% block at 10 nM), when tested on DRG neurons. This is Omega-scoloptoxin(15)-Ssd3c from Scolopendra dehaani (Thai centipede).